A 49-amino-acid polypeptide reads, in one-letter code: Large ribosomal subunit protein bL33B (49 aa).

It belongs to the bacterial ribosomal protein bL33 family.

This is Large ribosomal subunit protein bL33B (rpmG2) from Lactococcus lactis subsp. lactis (strain IL1403) (Streptococcus lactis).